The chain runs to 342 residues: AM-toxin biosynthesis protein 12 (342 aa).

The signal sequence occupies residues 1–20; that stretch reads MSLLITSLAWGALLDPEVSS.

It participates in mycotoxin biosynthesis. Its function is as follows. Part of the gene clusters that mediate the biosynthesis of AM-toxins, host-selective toxins (HSTs) causing Alternaria blotch on apple, a worldwide distributed disease. AM-toxins are cyclic depsipeptides containing the 3 residues 2-hydroxy-isovaleric acid (2-HIV), dehydroalanine, L-alanine which are common for all 3 AM-toxins I to III. The fourth precursor is L-alpha-amino-methoxyphenyl-valeric acid (L-Amv) for AM-toxin I, L-alpha-amino-phenyl-valeric acid (L-Apv) for AM-toxin II, and L-alpha-amino-hydroxyphenyl-valeric acid (L-Ahv) for AM-toxin III. AM-toxins have two target sites for affecting susceptible apple cells; they cause invagination of the plasma membrane and electrolyte loss and chloroplast disorganization. The non-ribosomal peptide synthetase AMT1 contains 4 catalytic modules and is responsible for activation of each residue in AM-toxin. The aldo-keto reductase AMT2 catalyzes the conversion of 2-keto-isovaleric acid (2-KIV) to 2-hydroxy-isovaleric acid (2-HIV), one of the precursor residues incorporated by AMT1 during AM-toxin biosynthesis, by reduction of its ketone to an alcohol. The cytochrome P450 monooxygenase AMT3 and the thioesterase AMT4 are also important for AM-toxin production, but their exact function within the AM-toxin biosynthesis are not known yet. Up to 21 proteins (including AMT1 to AMT4) are predicted to be involved in AM-toxin biosynthesis since their expression ishighly up-regulated in AM-toxin-producing cultures. This Alternaria alternata (Alternaria rot fungus) protein is AM-toxin biosynthesis protein 12.